Consider the following 884-residue polypeptide: Blastomere cadherin (884 aa).

Residues 1–26 (MGGTDKFRYPSVWLCGLLCLLQVVPS) form the signal peptide. A propeptide spanning residues 27 to 157 (INVDVSGCQP…KHTGLKRKKR (131 aa)) is cleaved from the precursor. Cadherin domains lie at 158–265 (DWVI…RPKF), 266–378 (TQPV…APIF), 379–489 (DPKT…APVF), 490–595 (VPVV…DNGP), and 596–706 (VPSP…GFDL). Topologically, residues 158-706 (DWVIPPIKVS…QEKLVAGFDL (549 aa)) are extracellular. Residues asparagine 427, asparagine 560, and asparagine 683 are each glycosylated (N-linked (GlcNAc...) asparagine). Residues 707-730 (PIILVILGSILALLILSLLLLLFL) form a helical membrane-spanning segment. Over 731 to 884 (KRKKVVKEPL…YGGDDDDDEE (154 aa)) the chain is Cytoplasmic.

As to expression, expressed in pituitary gland, lung and kidney.

The protein resides in the cell membrane. Its function is as follows. Cadherins are calcium-dependent cell adhesion proteins. They preferentially interact with themselves in a homophilic manner in connecting cells; cadherins may thus contribute to the sorting of heterogeneous cell types. The chain is Blastomere cadherin from Xenopus laevis (African clawed frog).